Consider the following 464-residue polypeptide: Glucan 1,3-beta-glucosidase 3 (464 aa).

This sequence belongs to the glycosyl hydrolase 5 (cellulase A) family.

The catalysed reaction is Successive hydrolysis of beta-D-glucose units from the non-reducing ends of (1-&gt;3)-beta-D-glucans, releasing alpha-glucose.. This is Glucan 1,3-beta-glucosidase 3 (exg3) from Schizosaccharomyces pombe (strain 972 / ATCC 24843) (Fission yeast).